The sequence spans 251 residues: NADPH-dependent oxidoreductase (251 aa).

It belongs to the flavin oxidoreductase frp family. Requires FMN as cofactor.

Functionally, reduces FMN, organic nitro compounds and disulfide DTNB. Involved in maintenance of the cellular redox state and the disulfide stress response. The polypeptide is NADPH-dependent oxidoreductase (nfrA) (Staphylococcus aureus (strain bovine RF122 / ET3-1)).